A 461-amino-acid chain; its full sequence is Glycine--tRNA ligase (461 aa).

Substrate-binding residues include arginine 100 and glutamate 174. ATP-binding positions include 206–208 (RNE), 216–221 (FRTREF), 290–291 (EL), and 334–337 (GVDR). 221–225 (FEQME) serves as a coordination point for substrate. A substrate-binding site is contributed by 330-334 (EPSVG).

The protein belongs to the class-II aminoacyl-tRNA synthetase family. As to quaternary structure, homodimer.

It localises to the cytoplasm. It catalyses the reaction tRNA(Gly) + glycine + ATP = glycyl-tRNA(Gly) + AMP + diphosphate. Catalyzes the attachment of glycine to tRNA(Gly). This chain is Glycine--tRNA ligase, found in Caldanaerobacter subterraneus subsp. tengcongensis (strain DSM 15242 / JCM 11007 / NBRC 100824 / MB4) (Thermoanaerobacter tengcongensis).